A 412-amino-acid polypeptide reads, in one-letter code: Docking protein 2 (412 aa).

One can recognise a PH domain in the interval 4–114 (GAVKQGFLYL…WVQAICLLAF (111 aa)). The IRS-type PTB domain occupies 147–252 (PHKEFAVTMR…SAQKNAAPAT (106 aa)). The interval 246–296 (KNAAPATPQPQPATIPASLPRPDSPYSRPHDSLPPPSPTTPVPAPRPRGQE) is disordered. Y271 bears the Phosphotyrosine mark. Positions 277-291 (SLPPPSPTTPVPAPR) are enriched in pro residues. Y299 and Y345 each carry phosphotyrosine. The disordered stretch occupies residues 359-412 (SPQEPRGEAWRRQATADRDPAGLQHVQPAGQDFSASGWQPGTEYDNVVLKKGPK). A compositionally biased stretch (basic and acidic residues) spans 361–378 (QEPRGEAWRRQATADRDP).

Belongs to the DOK family. Type A subfamily. In terms of assembly, interacts with phosphorylated RASGAP and EGFR. Interacts with RET and NCK. Interacts (via PH domain) with TEK/TIE2 (tyrosine phosphorylated). (Microbial infection) Interacts with Herpes simplex virus 1 (HHV-1) protein UL46; this interaction induces DOK2 phosphorylation and subsequent degradation. Post-translationally, on immunoreceptor stimulation, phosphorylated on C-terminal tyrosine residues. Phosphorylation on Tyr-345 is required for binding to the SH2 domain of NCK. Phosphorylation on both Tyr-271 and Tyr-299 is required for interaction with RASGAP. Phosphorylated on tyrosine residues by TEK/TIE2. Highly expressed in peripheral blood leukocytes, lymph nodes and spleen. Lower expression in thymus, bone marrow and fetal liver.

In terms of biological role, DOK proteins are enzymatically inert adaptor or scaffolding proteins. They provide a docking platform for the assembly of multimolecular signaling complexes. DOK2 may modulate the cellular proliferation induced by IL-4, as well as IL-2 and IL-3. May be involved in modulating Bcr-Abl signaling. Attenuates EGF-stimulated MAP kinase activation. The polypeptide is Docking protein 2 (DOK2) (Homo sapiens (Human)).